The sequence spans 415 residues: Carbamoyl phosphate synthase arginine-specific small chain (415 aa).

A mitochondrion-targeting transit peptide spans 1-17; that stretch reads MLRFLKPFPLRFGKRFY. Serine 88, glycine 272, and glycine 274 together coordinate L-glutamine. Residues 225–412 enclose the Glutamine amidotransferase type-1 domain; it reads NIAVIDCGVK…IKEAIKYQKS (188 aa). Cysteine 301 acts as the Nucleophile in catalysis. 5 residues coordinate L-glutamine: methionine 302, glutamine 305, asparagine 343, glycine 345, and tyrosine 346. Residues histidine 385 and glutamate 387 contribute to the active site.

Belongs to the CarA family. Heterodimer composed of 2 chains; the small (or glutamine) chain promotes the hydrolysis of glutamine to ammonia, which is used by the large (or ammonia) chain to synthesize carbamoyl phosphate.

It is found in the mitochondrion. The protein localises to the cytoplasm. It catalyses the reaction hydrogencarbonate + L-glutamine + 2 ATP + H2O = carbamoyl phosphate + L-glutamate + 2 ADP + phosphate + 2 H(+). The enzyme catalyses L-glutamine + H2O = L-glutamate + NH4(+). It participates in amino-acid biosynthesis; L-arginine biosynthesis; carbamoyl phosphate from bicarbonate: step 1/1. Small subunit of the arginine-specific carbamoyl phosphate synthase (CPSase). CPSase catalyzes the formation of carbamoyl phosphate from the ammonia moiety of glutamine, carbonate, and phosphate donated by ATP, the first step of the arginine biosynthetic pathway. The small subunit (glutamine amidotransferase) binds and cleaves glutamine to supply the large subunit with the substrate ammonia. The polypeptide is Carbamoyl phosphate synthase arginine-specific small chain (arg5) (Schizosaccharomyces pombe (strain 972 / ATCC 24843) (Fission yeast)).